The following is a 129-amino-acid chain: MSTPTHNLPRTRVSAFCWVALERSTRIERPTSWSWKELSHYSLIVFHCIPDTTPKQIEECFKKFLRRPDIVIILINQVYADMIRPTVDAHNLAVPTVLEIPSKQHPYDSSRDSILKRAQRVITPPERHY.

It belongs to the V-ATPase F subunit family. V-ATPase is a heteromultimeric enzyme made up of two complexes: the ATP-hydrolytic V1 complex and the proton translocation V0 complex. The V1 complex consists of three catalytic AB heterodimers that form a heterohexamer, three peripheral stalks each consisting of EG heterodimers, one central rotor including subunits D and F, and the regulatory subunits C and H. The proton translocation complex V0 consists of the proton transport subunit a, a ring of proteolipid subunits c9c'', rotary subunit d, subunits e and f, and the accessory subunits VhaAC45 and ATP6AP2.

Its function is as follows. Subunit of the V1 complex of vacuolar(H+)-ATPase (V-ATPase), a multisubunit enzyme composed of a peripheral complex (V1) that hydrolyzes ATP and a membrane integral complex (V0) that translocates protons. V-ATPase is responsible for acidifying and maintaining the pH of intracellular compartments and in some cell types, is targeted to the plasma membrane, where it is responsible for acidifying the extracellular environment. This is V-type proton ATPase subunit F 2 (Vha14-2) from Drosophila melanogaster (Fruit fly).